A 506-amino-acid polypeptide reads, in one-letter code: GMP synthase [glutamine-hydrolyzing] (506 aa).

One can recognise a Glutamine amidotransferase type-1 domain in the interval 4-192 (KLIILDFGSQ…FLDICGMKRD (189 aa)). C79 serves as the catalytic Nucleophile. Active-site residues include H167 and E169. Positions 193 to 381 (WTPASFIEAT…LGMMPHLIHR (189 aa)) constitute a GMPS ATP-PPase domain. Residue 220–226 (SGGVDSS) participates in ATP binding.

As to quaternary structure, homodimer.

It catalyses the reaction XMP + L-glutamine + ATP + H2O = GMP + L-glutamate + AMP + diphosphate + 2 H(+). It participates in purine metabolism; GMP biosynthesis; GMP from XMP (L-Gln route): step 1/1. Functionally, catalyzes the synthesis of GMP from XMP. The polypeptide is GMP synthase [glutamine-hydrolyzing] (Porphyromonas gingivalis (strain ATCC BAA-308 / W83)).